Reading from the N-terminus, the 276-residue chain is MLINIRPGDAPLSTPIHPTAIIHPNAELHPSVQVAPYAVIGEQVKIGASTIIGPNVVIEGPTEIGVGNRIFAGAVIGTEPQDLKYRGAASQVKIGDHNQIREYVTINRATGENEVTQIGNNNLLMAYAHVAHNCVIEDEVIIANSVALAGHIYIESKARISGVLGVHQFVHIGRLAMVGGMARIERDVPPFTTVEGNPSRVRTLNLIGLKRAGVNEAEISEMKKAFRLIYRSNLTLKQALEQLESWSNNPYVQHLRDFLHQSTTVTGRRGPIPGKE.

The protein belongs to the transferase hexapeptide repeat family. LpxA subfamily. As to quaternary structure, homotrimer.

The protein localises to the cytoplasm. The catalysed reaction is a (3R)-hydroxyacyl-[ACP] + UDP-N-acetyl-alpha-D-glucosamine = a UDP-3-O-[(3R)-3-hydroxyacyl]-N-acetyl-alpha-D-glucosamine + holo-[ACP]. It participates in glycolipid biosynthesis; lipid IV(A) biosynthesis; lipid IV(A) from (3R)-3-hydroxytetradecanoyl-[acyl-carrier-protein] and UDP-N-acetyl-alpha-D-glucosamine: step 1/6. Its function is as follows. Involved in the biosynthesis of lipid A, a phosphorylated glycolipid that anchors the lipopolysaccharide to the outer membrane of the cell. The polypeptide is Acyl-[acyl-carrier-protein]--UDP-N-acetylglucosamine O-acyltransferase (Gloeothece citriformis (strain PCC 7424) (Cyanothece sp. (strain PCC 7424))).